The following is a 1533-amino-acid chain: Actin cytoskeleton-regulatory complex protein pan-1 (1533 aa).

The tract at residues 1–204 (MYSNSNAFLG…PPPPVKPQAT (204 aa)) is disordered. 4 stretches are compositionally biased toward low complexity: residues 19 to 46 (QQPQ…QPTG), 53 to 136 (GFAP…FQTG), 143 to 170 (IPQQ…QPQP), and 177 to 193 (QIQA…QGGI). Residues 244–333 (DQARFETLFK…DHIKNEVSSM (90 aa)) enclose the EH 1 domain. The region spanning 277–312 (LDGDSLSQIWTLADTTRSGQLHFPEFALAMYLCNLK) is the EF-hand 1 domain. Low complexity predominate over residues 345–359 (AGSSSAPASNAPSFA). Disordered regions lie at residues 345–378 (AGSS…PQPS) and 393–423 (QQTG…GYAG). Polar residues-rich tracts occupy residues 360–378 (TQQN…PQPS) and 393–410 (QQTG…QQTG). An EH 2 domain is found at 513-602 (EKTRYDALFR…PELVPPSARN (90 aa)). Residues 546 to 581 (LDKPDLERIWTLADNGNKGRLDLDEFAVAMHLIYRK) form the EF-hand 2 domain. Residues 649–664 (NRKDATVFKNNDEEVG) show a composition bias toward basic and acidic residues. Disordered stretches follow at residues 649 to 691 (NRKD…GDDL), 894 to 917 (IEDS…WEDA), 935 to 1306 (SRAA…STNP), and 1334 to 1533 (DAIS…RVLD). A coiled-coil region spans residues 690–890 (DLTIEQLRKK…RDVEDSVREF (201 aa)). Basic and acidic residues-rich tracts occupy residues 894 to 916 (IEDS…RWED) and 935 to 947 (SRAA…DRQG). Over residues 968–982 (TPSPSISRTSTPAST) the composition is skewed to low complexity. Residues 1026–1209 (ETAAQRAERE…KQLEAIDDED (184 aa)) adopt a coiled-coil conformation. Composition is skewed to basic and acidic residues over residues 1031-1063 (RAER…KLAE), 1090-1164 (GKAD…EEEK), and 1173-1203 (EAKE…KQLE). The segment covering 1204–1218 (AIDDEDSSSSDEEGP) has biased composition (acidic residues). Residues 1221–1237 (ITPQASTPTVGGSQVGT) are compositionally biased toward polar residues. The segment covering 1279 to 1293 (SQSSEASTSSVAAPV) has biased composition (low complexity). Acidic residues predominate over residues 1348 to 1367 (DDDDDDWGSEKGSDDEDSDD). Positions 1412–1495 (SSPPPPPAPV…PPPGGAPAPS (84 aa)) are enriched in pro residues. Residues 1500–1517 (RPAGLLGEIQAGRALKKT) enclose the WH2 domain.

It belongs to the PAN1 family. As to quaternary structure, component of the PAN1 actin cytoskeleton-regulatory complex.

The protein localises to the cell membrane. Its subcellular location is the endosome membrane. It localises to the cytoplasm. It is found in the cytoskeleton. The protein resides in the actin patch. Functionally, component of the PAN1 actin cytoskeleton-regulatory complex required for the internalization of endosomes during actin-coupled endocytosis. The complex links the site of endocytosis to the cell membrane-associated actin cytoskeleton. Mediates uptake of external molecules and vacuolar degradation of plasma membrane proteins. Plays a role in the proper organization of the cell membrane-associated actin cytoskeleton and promotes its destabilization. The sequence is that of Actin cytoskeleton-regulatory complex protein pan-1 (pan-1) from Neurospora crassa (strain ATCC 24698 / 74-OR23-1A / CBS 708.71 / DSM 1257 / FGSC 987).